Consider the following 322-residue polypeptide: Ribonuclease Z (322 aa).

The Zn(2+) site is built by H62, H64, D66, H67, H143, D215, and H273. The active-site Proton acceptor is D66. Positions 300 to 314 (ELRRYELDPREKEPD) are enriched in basic and acidic residues. The tract at residues 300–322 (ELRRYELDPREKEPDPVGPADES) is disordered.

The protein belongs to the RNase Z family. Homodimer. It depends on Zn(2+) as a cofactor.

It carries out the reaction Endonucleolytic cleavage of RNA, removing extra 3' nucleotides from tRNA precursor, generating 3' termini of tRNAs. A 3'-hydroxy group is left at the tRNA terminus and a 5'-phosphoryl group is left at the trailer molecule.. In terms of biological role, zinc phosphodiesterase, which displays some tRNA 3'-processing endonuclease activity. Probably involved in tRNA maturation, by removing a 3'-trailer from precursor tRNA. This Salinibacter ruber (strain DSM 13855 / M31) protein is Ribonuclease Z.